We begin with the raw amino-acid sequence, 548 residues long: Putative ATP-dependent RNA helicase R290 (548 aa).

The region spanning 38–206 is the Helicase ATP-binding domain; the sequence is INKVINGEDV…CKVLQLKTNE (169 aa). 51 to 58 provides a ligand contact to ATP; that stretch reads LMTSAGKS. Residues 150–153 carry the DEAH box motif; the sequence is DEAH. One can recognise a Helicase C-terminal domain in the interval 231–376; sequence DIVPIINKYP…KTQLALLEQM (146 aa).

Belongs to the DEAD box helicase family. DEAH subfamily.

It catalyses the reaction ATP + H2O = ADP + phosphate + H(+). This is Putative ATP-dependent RNA helicase R290 from Acanthamoeba polyphaga mimivirus (APMV).